Reading from the N-terminus, the 367-residue chain is Probable cysteine protease RD19D (367 aa).

Positions 1–22 are cleaved as a signal peptide; that stretch reads MVAKALAQLITCIILFCHVVAS. A propeptide spans 23-136 (activation peptide); that stretch reads VEDLTIRQVT…AEAPMVEVDG (114 aa). Asn-61 carries N-linked (GlcNAc...) asparagine glycosylation. 2 disulfides stabilise this stretch: Cys-158/Cys-208 and Cys-192/Cys-241. Cys-161 is a catalytic residue. The N-linked (GlcNAc...) asparagine glycan is linked to Asn-254. An intrachain disulfide couples Cys-297 to Cys-352. Residues His-304 and Asn-331 contribute to the active site.

This sequence belongs to the peptidase C1 family.

Its function is as follows. Probable thiol protease. The chain is Probable cysteine protease RD19D from Arabidopsis thaliana (Mouse-ear cress).